Consider the following 559-residue polypeptide: Peptidyl-prolyl isomerase cwc27 (559 aa).

One can recognise a PPIase cyclophilin-type domain in the interval 11–184; sequence PTASATLHTT…YPVKVVSCEV (174 aa). Disordered stretches follow at residues 201-395, 413-449, and 518-559; these read ATAP…GFSS, ESAD…EDEE, and PRER…REKP. Over residues 261 to 273 the composition is skewed to basic and acidic residues; that stretch reads APKKTSPEAEQQT. A compositionally biased stretch (pro residues) spans 305 to 319; the sequence is LPDPESPARSPPQSP. Polar residues-rich tracts occupy residues 384–394 and 425–442; these read GSSTNGVTGFS and TSIS…AKSN.

This sequence belongs to the cyclophilin-type PPIase family. CWC27 subfamily. In terms of assembly, associated with the spliceosome.

It is found in the cytoplasm. The protein resides in the nucleus. It catalyses the reaction [protein]-peptidylproline (omega=180) = [protein]-peptidylproline (omega=0). Functionally, PPIases accelerate the folding of proteins. It catalyzes the cis-trans isomerization of proline imidic peptide bonds in oligopeptides. Involved in pre-mRNA splicing. This chain is Peptidyl-prolyl isomerase cwc27 (cwc27), found in Aspergillus fumigatus (strain ATCC MYA-4609 / CBS 101355 / FGSC A1100 / Af293) (Neosartorya fumigata).